The following is a 649-amino-acid chain: Extracellular metalloproteinase 4 (649 aa).

An N-terminal signal peptide occupies residues 1 to 18; the sequence is MHGLLLAGLLALPSNVLG. Positions 19–260 are excised as a propeptide; the sequence is HPAEPPNSVN…VHGVVDYVAS (242 aa). His443 serves as a coordination point for Zn(2+). Glu444 is a catalytic residue. His447 lines the Zn(2+) pocket. Asn494 and Asn609 each carry an N-linked (GlcNAc...) asparagine glycan.

The protein belongs to the peptidase M36 family. The cofactor is Zn(2+).

Its subcellular location is the secreted. In terms of biological role, secreted metalloproteinase probably acting as a virulence factor. The sequence is that of Extracellular metalloproteinase 4 (MEP4) from Arthroderma otae (strain ATCC MYA-4605 / CBS 113480) (Microsporum canis).